Consider the following 365-residue polypeptide: Alanine racemase (365 aa).

Lysine 32 (proton acceptor; specific for D-alanine) is an active-site residue. N6-(pyridoxal phosphate)lysine is present on lysine 32. Arginine 128 is a substrate binding site. Tyrosine 257 (proton acceptor; specific for L-alanine) is an active-site residue. Residue methionine 305 participates in substrate binding.

The protein belongs to the alanine racemase family. Requires pyridoxal 5'-phosphate as cofactor.

The enzyme catalyses L-alanine = D-alanine. It functions in the pathway amino-acid biosynthesis; D-alanine biosynthesis; D-alanine from L-alanine: step 1/1. In terms of biological role, catalyzes the interconversion of L-alanine and D-alanine. May also act on other amino acids. This is Alanine racemase (alr) from Francisella tularensis subsp. holarctica (strain OSU18).